The sequence spans 130 residues: Small ribosomal subunit protein uS11 (130 aa).

The protein belongs to the universal ribosomal protein uS11 family. In terms of assembly, part of the 30S ribosomal subunit. Interacts with proteins S7 and S18. Binds to IF-3.

Located on the platform of the 30S subunit, it bridges several disparate RNA helices of the 16S rRNA. Forms part of the Shine-Dalgarno cleft in the 70S ribosome. The protein is Small ribosomal subunit protein uS11 of Lactobacillus helveticus (strain DPC 4571).